A 215-amino-acid polypeptide reads, in one-letter code: Probable phosphoglycerate mutase GpmB (215 aa).

Substrate-binding positions include 8–15, 21–22, Arg58, Arg60, 82–85, 104–105, and 151–152; these read RHGETQWN, QG, ELDM, RR, and GI. His9 (tele-phosphohistidine intermediate) is an active-site residue. Glu82 serves as the catalytic Proton donor/acceptor.

It belongs to the phosphoglycerate mutase family. GpmB subfamily.

The enzyme catalyses (2R)-2-phosphoglycerate = (2R)-3-phosphoglycerate. The protein operates within carbohydrate degradation; glycolysis; pyruvate from D-glyceraldehyde 3-phosphate: step 3/5. This is Probable phosphoglycerate mutase GpmB from Citrobacter koseri (strain ATCC BAA-895 / CDC 4225-83 / SGSC4696).